Here is a 268-residue protein sequence, read N- to C-terminus: Tropinone reductase homolog At2g29150 (268 aa).

An NADP(+)-binding site is contributed by 22 to 46 (LVTGGSKGLGEAVVEELAMLGARVH). Ser155 lines the substrate pocket. Tyr167 functions as the Proton acceptor in the catalytic mechanism.

Belongs to the short-chain dehydrogenases/reductases (SDR) family. SDR65C subfamily.

Its function is as follows. Enantiospecific reductase active on cyclic monoterpenes and small flexible lipophilic carbonyls. No activity with tropinone, nitrogen-containing tropinone analogs, tropine or pseudotropine as substrate. This Arabidopsis thaliana (Mouse-ear cress) protein is Tropinone reductase homolog At2g29150.